Consider the following 335-residue polypeptide: Glyceraldehyde-3-phosphate dehydrogenase, cytosolic (335 aa).

NAD(+) contacts are provided by residues 13–14, Asp35, and Arg80; that span reads RI. D-glyceraldehyde 3-phosphate is bound by residues 151-153, Thr182, 211-212, and Arg234; these read SCT and TG. The Nucleophile role is filled by Cys152. Asn316 serves as a coordination point for NAD(+).

Belongs to the glyceraldehyde-3-phosphate dehydrogenase family. In terms of assembly, homotetramer.

Its subcellular location is the cytoplasm. The enzyme catalyses D-glyceraldehyde 3-phosphate + phosphate + NAD(+) = (2R)-3-phospho-glyceroyl phosphate + NADH + H(+). It functions in the pathway carbohydrate degradation; glycolysis; pyruvate from D-glyceraldehyde 3-phosphate: step 1/5. In Gracilaria gracilis (Red alga), this protein is Glyceraldehyde-3-phosphate dehydrogenase, cytosolic (GAPC).